Here is a 117-residue protein sequence, read N- to C-terminus: Large ribosomal subunit protein uL24 (117 aa).

The protein belongs to the universal ribosomal protein uL24 family. Part of the 50S ribosomal subunit.

In terms of biological role, one of two assembly initiator proteins, it binds directly to the 5'-end of the 23S rRNA, where it nucleates assembly of the 50S subunit. Its function is as follows. Located at the polypeptide exit tunnel on the outside of the subunit. This Methanothermobacter thermautotrophicus (strain ATCC 29096 / DSM 1053 / JCM 10044 / NBRC 100330 / Delta H) (Methanobacterium thermoautotrophicum) protein is Large ribosomal subunit protein uL24.